The chain runs to 421 residues: Gamma-glutamyl phosphate reductase (421 aa).

It belongs to the gamma-glutamyl phosphate reductase family.

Its subcellular location is the cytoplasm. The enzyme catalyses L-glutamate 5-semialdehyde + phosphate + NADP(+) = L-glutamyl 5-phosphate + NADPH + H(+). The protein operates within amino-acid biosynthesis; L-proline biosynthesis; L-glutamate 5-semialdehyde from L-glutamate: step 2/2. Catalyzes the NADPH-dependent reduction of L-glutamate 5-phosphate into L-glutamate 5-semialdehyde and phosphate. The product spontaneously undergoes cyclization to form 1-pyrroline-5-carboxylate. This is Gamma-glutamyl phosphate reductase from Pseudomonas syringae pv. tomato (strain ATCC BAA-871 / DC3000).